The following is a 184-amino-acid chain: Ras-related protein Rap1 (184 aa).

10 to 17 (GSGGVGKS) serves as a coordination point for GTP. The Effector region signature appears at 32–40 (YDPTIEDSY). GTP is bound by residues 57 to 61 (DTAGT) and 116 to 119 (NKCD). A Cysteine methyl ester modification is found at Cys-181. The S-geranylgeranyl cysteine moiety is linked to residue Cys-181. The propeptide at 182 to 184 (VLL) is removed in mature form.

The protein belongs to the small GTPase superfamily. Ras family.

It is found in the cell membrane. The enzyme catalyses GTP + H2O = GDP + phosphate + H(+). With respect to regulation, alternates between an inactive form bound to GDP and an active form bound to GTP. Activated by a guanine nucleotide-exchange factor (GEF) and inactivated by a GTPase-activating protein (GAP). In terms of biological role, ras proteins bind GDP/GTP and possess intrinsic GTPase activity. Plays a role in photoreceptor cell determination. In Drosophila melanogaster (Fruit fly), this protein is Ras-related protein Rap1.